We begin with the raw amino-acid sequence, 233 residues long: Biosynthetic peptidoglycan transglycosylase (233 aa).

The helical transmembrane segment at 17 to 37 (IVLAVLALVVLPYVLIFFYLL) threads the bilayer.

This sequence belongs to the glycosyltransferase 51 family.

The protein resides in the cell inner membrane. It catalyses the reaction [GlcNAc-(1-&gt;4)-Mur2Ac(oyl-L-Ala-gamma-D-Glu-L-Lys-D-Ala-D-Ala)](n)-di-trans,octa-cis-undecaprenyl diphosphate + beta-D-GlcNAc-(1-&gt;4)-Mur2Ac(oyl-L-Ala-gamma-D-Glu-L-Lys-D-Ala-D-Ala)-di-trans,octa-cis-undecaprenyl diphosphate = [GlcNAc-(1-&gt;4)-Mur2Ac(oyl-L-Ala-gamma-D-Glu-L-Lys-D-Ala-D-Ala)](n+1)-di-trans,octa-cis-undecaprenyl diphosphate + di-trans,octa-cis-undecaprenyl diphosphate + H(+). The protein operates within cell wall biogenesis; peptidoglycan biosynthesis. Functionally, peptidoglycan polymerase that catalyzes glycan chain elongation from lipid-linked precursors. The chain is Biosynthetic peptidoglycan transglycosylase from Rhizobium etli (strain ATCC 51251 / DSM 11541 / JCM 21823 / NBRC 15573 / CFN 42).